Consider the following 228-residue polypeptide: Sodium channel regulatory subunit beta-4 (228 aa).

The N-terminal stretch at 1 to 30 (MPGAGDGGKAPARWLGTGLLGLFLLPVTLS) is a signal peptide. The Ig-like C2-type domain occupies 31-148 (LEVSVGKATD…NNLQHHATIF (118 aa)). The Extracellular segment spans residues 31–162 (LEVSVGKATD…DRLEEVDNTV (132 aa)). N-linked (GlcNAc...) asparagine glycans are attached at residues Asn-45, Asn-71, and Asn-113. A disulfide bond links Cys-53 and Cys-131. A helical membrane pass occupies residues 163–183 (TLIILAVVGGVIGLLILILLI). At 184–228 (KKLIIFILKKTREKKKECLVSSSGNDNTENGLPGSKAEEKPPSKV) the chain is on the cytoplasmic side. A disordered region spans residues 200-228 (ECLVSSSGNDNTENGLPGSKAEEKPPSKV). Positions 203–213 (VSSSGNDNTEN) are enriched in polar residues. Residues 219 to 228 (KAEEKPPSKV) show a composition bias toward basic and acidic residues.

Belongs to the sodium channel auxiliary subunit SCN4B (TC 8.A.17) family. In terms of assembly, a voltage-gated sodium (Nav) channel consists of an ion-conducting pore-forming alpha subunit functional on its own that is regulated by one or more beta subunits. The beta subunit SCN4B is disulfide-linked to the pore-forming alpha subunit. Interacts with SCN1A; regulatory subunit of SCN1A/Nav1.1. Interacts with SCN2A; regulatory subunit of SCN2A/Nav1.2. In terms of processing, contains an interchain disulfide bond with SCN2A. Post-translationally, N-glycosylated. Expressed at a high level in dorsal root ganglia, at a lower level in brain, spinal cord, skeletal muscle and heart. Expressed in the atrium.

It localises to the cell membrane. Its function is as follows. Regulatory subunit of multiple voltage-gated sodium (Nav) channels directly mediating the depolarization of excitable membranes. Navs, also called VGSCs (voltage-gated sodium channels) or VDSCs (voltage-dependent sodium channels), operate by switching between closed and open conformations depending on the voltage difference across the membrane. In the open conformation they allow Na(+) ions to selectively pass through the pore, along their electrochemical gradient. The influx of Na+ ions provokes membrane depolarization, initiating the propagation of electrical signals throughout cells and tissues. The accessory beta subunits participate in localization and functional modulation of the Nav channels. Modulates the activity of SCN1A/Nav1.1. Modulates the activity of SCN2A/Nav1.2. This is Sodium channel regulatory subunit beta-4 from Homo sapiens (Human).